The following is a 414-amino-acid chain: Esterase FrsA (414 aa).

Belongs to the FrsA family.

The enzyme catalyses a carboxylic ester + H2O = an alcohol + a carboxylate + H(+). In terms of biological role, catalyzes the hydrolysis of esters. The sequence is that of Esterase FrsA from Salmonella agona (strain SL483).